The following is a 234-amino-acid chain: 2-amino-5-formylamino-6-ribosylaminopyrimidin-4(3H)-one 5'-monophosphate deformylase (234 aa).

4 residues coordinate Fe cation: glutamate 30, histidine 32, aspartate 41, and histidine 111.

This sequence belongs to the creatininase superfamily. FAPy deformylase family. In terms of assembly, homodimer. The cofactor is Fe(2+). Zn(2+) is required as a cofactor.

It catalyses the reaction 2-amino-5-formylamino-6-(5-phospho-D-ribosylamino)pyrimidin-4(3H)-one + H2O = 2,5-diamino-6-(1-D-ribosylamino)pyrimidin-4(3H)-one 5'-phosphate + formate + H(+). It participates in cofactor biosynthesis; coenzyme F420 biosynthesis. The protein operates within cofactor biosynthesis; riboflavin biosynthesis. Catalyzes the hydrolysis of the formamide of 2-amino-5-formylamino-6-ribosylamino-4(3H)-pyrimidinone 5'-monophosphate (FAPy) to form 2,5-diamino-6-ribosylamino-4(3H)-pyrimidinone 5'-phosphate (APy). This chain is 2-amino-5-formylamino-6-ribosylaminopyrimidin-4(3H)-one 5'-monophosphate deformylase, found in Methanothermobacter thermautotrophicus (strain ATCC 29096 / DSM 1053 / JCM 10044 / NBRC 100330 / Delta H) (Methanobacterium thermoautotrophicum).